Reading from the N-terminus, the 122-residue chain is Large ribosomal subunit protein uL14 (122 aa).

The protein belongs to the universal ribosomal protein uL14 family. As to quaternary structure, part of the 50S ribosomal subunit. Forms a cluster with proteins L3 and L19. In the 70S ribosome, L14 and L19 interact and together make contacts with the 16S rRNA in bridges B5 and B8.

Its function is as follows. Binds to 23S rRNA. Forms part of two intersubunit bridges in the 70S ribosome. This is Large ribosomal subunit protein uL14 from Thermobifida fusca (strain YX).